A 180-amino-acid polypeptide reads, in one-letter code: NADH-quinone oxidoreductase subunit I (180 aa).

2 4Fe-4S ferredoxin-type domains span residues G46–T80 and E90–D119. [4Fe-4S] cluster contacts are provided by C60, C63, C66, C70, C99, C102, C105, and C109.

This sequence belongs to the complex I 23 kDa subunit family. NDH-1 is composed of 14 different subunits. Subunits NuoA, H, J, K, L, M, N constitute the membrane sector of the complex. [4Fe-4S] cluster serves as cofactor.

It localises to the cell membrane. It catalyses the reaction a quinone + NADH + 5 H(+)(in) = a quinol + NAD(+) + 4 H(+)(out). Its function is as follows. NDH-1 shuttles electrons from NADH, via FMN and iron-sulfur (Fe-S) centers, to quinones in the respiratory chain. The immediate electron acceptor for the enzyme in this species is believed to be ubiquinone. Couples the redox reaction to proton translocation (for every two electrons transferred, four hydrogen ions are translocated across the cytoplasmic membrane), and thus conserves the redox energy in a proton gradient. The sequence is that of NADH-quinone oxidoreductase subunit I from Baumannia cicadellinicola subsp. Homalodisca coagulata.